Consider the following 470-residue polypeptide: Properdin (470 aa).

The signal sequence occupies residues 1-26; the sequence is MTAPVQVPQSLLLLLMLLLTLPATGS. TSP type-1 domains are found at residues 27–75, 76–133, 135–190, 192–254, 256–312, 314–376, and 380–463; these read DPVL…QACR, SPRW…QCCP, MGGW…QVCP, HGAW…PPCP, AGGW…VPCP, DGEW…QNCI, and KGSW…PACK. Disulfide bonds link Cys-31–Cys-55, Cys-42–Cys-71, and Cys-56–Cys-74. C-linked (Man) tryptophan glycans are attached at residues Trp-82 and Trp-85. 7 disulfides stabilise this stretch: Cys-88-Cys-126, Cys-92-Cys-132, Cys-103-Cys-110, Cys-131-Cys-169, Cys-147-Cys-183, Cys-151-Cys-189, and Cys-162-Cys-173. Residues Trp-138, Trp-141, and Trp-144 are each glycosylated (C-linked (Man) tryptophan). Thr-150 carries an O-linked (Fuc...) threonine glycan. C-linked (Man) tryptophan glycans are attached at residues Trp-195, Trp-198, and Trp-201. 3 disulfide bridges follow: Cys-204-Cys-247, Cys-208-Cys-253, and Cys-223-Cys-237. An O-linked (Fuc...) serine glycan is attached at Ser-207. Trp-259 and Trp-262 each carry a C-linked (Man) tryptophan glycan. 3 disulfides stabilise this stretch: Cys-268-Cys-305, Cys-272-Cys-311, and Cys-283-Cys-295. O-linked (Fuc...) threonine glycosylation occurs at Thr-271. 2 C-linked (Man) tryptophan glycosylation sites follow: Trp-320 and Trp-323. Disulfide bonds link Cys-326-Cys-369, Cys-336-Cys-375, and Cys-349-Cys-359. Positions 350-358 are interaction with Complement C3 beta chain; that stretch reads KGRKFNGQR. Trp-383, Trp-386, and Trp-389 each carry a C-linked (Man) tryptophan glycan. 3 disulfide bridges follow: Cys-392–Cys-456, Cys-396–Cys-462, and Cys-408–Cys-440. Residue Asn-429 is glycosylated (N-linked (GlcNAc...) asparagine).

In terms of assembly, in plasma, properdin exists as dimers, trimers or tetramers in the relative proportions of 26:54:20. Interacts with the pro-C3-convertase enzyme complex (C3b-Bb) comprised of Complement C3 beta chain (C3b) and the Complement factor B Bb fragment (Bb), where it binds (via its TSP type-1 5 domain) with C3b and Bb. This interaction stabilizes the complex and allows it to become the active C3-convertase enzyme complex (C3b-Bb-FP). Interacts with C3b. Interacts with CFB.

It localises to the secreted. A positive regulator of the alternate pathway of complement. It binds to and stabilizes the C3- and C5-convertase enzyme complexes. Inhibits CFI-CFH mediated degradation of Inhibits CFI-CFH mediated degradation of Complement C3 beta chain (C3b). This is Properdin (CFP) from Cavia porcellus (Guinea pig).